A 243-amino-acid chain; its full sequence is Tyrosine recombinase XerD-like (243 aa).

One can recognise a Core-binding (CB) domain in the interval 1–72 (MKQAIESFIQ…AVNQFLYFLY (72 aa)). The Tyr recombinase domain occupies 91 to 243 (SVKKKLERED…KTSMSLEKFR (153 aa)). Residues K149 and R210 contribute to the active site.

This sequence belongs to the 'phage' integrase family. XerD-like subfamily.

The protein resides in the cytoplasm. Putative tyrosine recombinase. Not involved in the cutting and rejoining of the recombining DNA molecules on dif(SL) site. This Streptococcus suis (strain 98HAH33) protein is Tyrosine recombinase XerD-like.